Reading from the N-terminus, the 197-residue chain is MFITFEGIDGSGKSTQIQLLAQYLEKRGKKVILKREPGGTETGEKIRKILLEEEVTPKAELFLFLASRNLLVTEIKQYLSEGYAVLLDRYTDSSVAYQGFGRNLGKEIVEELNDFATDGLIPDLTFYIDVDVETALKRKGELNRFEKREFLERVREGYLVLAREHPERIVVLDGKRSIEEIHRDVVREVKRRWKLDV.

7-14 is an ATP binding site; it reads GIDGSGKS.

It belongs to the thymidylate kinase family.

The enzyme catalyses dTMP + ATP = dTDP + ADP. In terms of biological role, phosphorylation of dTMP to form dTDP in both de novo and salvage pathways of dTTP synthesis. In Thermotoga maritima (strain ATCC 43589 / DSM 3109 / JCM 10099 / NBRC 100826 / MSB8), this protein is Thymidylate kinase (tmk).